The primary structure comprises 669 residues: DNA ligase (669 aa).

Residues 35–39 (DSVYD), 84–85 (SL), and Glu-116 contribute to the NAD(+) site. The active-site N6-AMP-lysine intermediate is the Lys-118. NAD(+) contacts are provided by Arg-139, Glu-176, Lys-291, and Lys-315. Zn(2+) contacts are provided by Cys-409, Cys-412, Cys-427, and Cys-432. One can recognise a BRCT domain in the interval 591–669 (TTKATLAGKT…EAQLLELIKA (79 aa)).

This sequence belongs to the NAD-dependent DNA ligase family. LigA subfamily. The cofactor is Mg(2+). It depends on Mn(2+) as a cofactor.

It carries out the reaction NAD(+) + (deoxyribonucleotide)n-3'-hydroxyl + 5'-phospho-(deoxyribonucleotide)m = (deoxyribonucleotide)n+m + AMP + beta-nicotinamide D-nucleotide.. Its function is as follows. DNA ligase that catalyzes the formation of phosphodiester linkages between 5'-phosphoryl and 3'-hydroxyl groups in double-stranded DNA using NAD as a coenzyme and as the energy source for the reaction. It is essential for DNA replication and repair of damaged DNA. This Microcystis aeruginosa (strain NIES-843 / IAM M-2473) protein is DNA ligase.